We begin with the raw amino-acid sequence, 365 residues long: uncharacterized protein (365 aa).

2 disordered regions span residues 218–262 (QRPS…AEAA) and 315–342 (PRLP…RTPC). Composition is skewed to basic and acidic residues over residues 239–257 (PDNR…KDPE) and 331–341 (MEFRNLSDRTP).

This is an uncharacterized protein from Mus musculus (Mouse).